The sequence spans 216 residues: Peptide methionine sulfoxide reductase MsrA (216 aa).

Cys54 is an active-site residue.

It belongs to the MsrA Met sulfoxide reductase family.

It carries out the reaction L-methionyl-[protein] + [thioredoxin]-disulfide + H2O = L-methionyl-(S)-S-oxide-[protein] + [thioredoxin]-dithiol. It catalyses the reaction [thioredoxin]-disulfide + L-methionine + H2O = L-methionine (S)-S-oxide + [thioredoxin]-dithiol. Has an important function as a repair enzyme for proteins that have been inactivated by oxidation. Catalyzes the reversible oxidation-reduction of methionine sulfoxide in proteins to methionine. In Xanthomonas euvesicatoria pv. vesicatoria (strain 85-10) (Xanthomonas campestris pv. vesicatoria), this protein is Peptide methionine sulfoxide reductase MsrA.